The primary structure comprises 537 residues: Arginine--tRNA ligase (537 aa).

Residues alanine 113–histidine 123 carry the 'HIGH' region motif.

The protein belongs to the class-I aminoacyl-tRNA synthetase family. In terms of assembly, monomer.

Its subcellular location is the cytoplasm. The enzyme catalyses tRNA(Arg) + L-arginine + ATP = L-arginyl-tRNA(Arg) + AMP + diphosphate. This chain is Arginine--tRNA ligase (argS), found in Mycoplasma genitalium (strain ATCC 33530 / DSM 19775 / NCTC 10195 / G37) (Mycoplasmoides genitalium).